The primary structure comprises 584 residues: Beta-fructofuranosidase, insoluble isoenzyme CWINV1 (584 aa).

The N-terminal stretch at 1–28 is a signal peptide; that stretch reads MTKEVCSNIGLWLLLTLLIGNYVVNLEA. Substrate is bound by residues 63 to 66, Gln82, Trp90, and 125 to 126; these read WMND and WS. The active site involves Asp66. N-linked (GlcNAc...) asparagine glycans are attached at residues Asn159 and Asn186. Substrate contacts are provided by residues 191 to 192, Glu246, and Asp282; that span reads RD. Asn342 and Asn446 each carry an N-linked (GlcNAc...) asparagine glycan. Cys442 and Cys491 form a disulfide bridge.

Belongs to the glycosyl hydrolase 32 family. In terms of tissue distribution, expressed in seedlings, leaves, flowers, and seeds.

The protein resides in the secreted. It is found in the extracellular space. The protein localises to the apoplast. It localises to the cell wall. The catalysed reaction is Hydrolysis of terminal non-reducing beta-D-fructofuranoside residues in beta-D-fructofuranosides.. Beta-fructofuranosidase that can use sucrose and 1-kestose, and, to a lower extent, neokestose and levan, as substrates, but not inuline. The polypeptide is Beta-fructofuranosidase, insoluble isoenzyme CWINV1 (CWINV1) (Arabidopsis thaliana (Mouse-ear cress)).